Here is a 229-residue protein sequence, read N- to C-terminus: Protein TraJ (229 aa).

The protein resides in the cytoplasm. In terms of biological role, this protein is essential for positively regulating the expression of transfer genes that are involved in the conjugal transfer of DNA between bacterial cells. In Escherichia coli (strain K12), this protein is Protein TraJ (traJ).